A 255-amino-acid chain; its full sequence is Malonyl-[acyl-carrier protein] O-methyltransferase (255 aa).

It belongs to the methyltransferase superfamily.

It carries out the reaction malonyl-[ACP] + S-adenosyl-L-methionine = malonyl-[ACP] methyl ester + S-adenosyl-L-homocysteine. Its pathway is cofactor biosynthesis; biotin biosynthesis. In terms of biological role, converts the free carboxyl group of a malonyl-thioester to its methyl ester by transfer of a methyl group from S-adenosyl-L-methionine (SAM). It allows to synthesize pimeloyl-ACP via the fatty acid synthetic pathway. This Porphyromonas gingivalis (strain ATCC BAA-308 / W83) protein is Malonyl-[acyl-carrier protein] O-methyltransferase.